The sequence spans 868 residues: MSDNRRRRREEDDSDSENELPPSSPQQHFRGGMNPVSSPIGSPDMINPEGDDNEVDDVPDIDEVEEQMNEVDLMDDNMYEDYAADHNRDRYDPDQVDDREQQELSLSERRRIDAQLNERDRLLRNVAYIDDEDEEQEGAAQLDEMGLPVQRRRRRRQYEDLENSDDDLLSDMDIDPLREELTLESLSNVKANSYSEWITQPNVSRTIARELKSFLLEYTDETGRSVYGARIRTLGEMNSESLEVNYRHLAESKAILALFLAKCPEEMLKIFDLVAMEATELHYPDYARIHSEIHVRISDFPTIYSLRELRESNLSSLVRVTGVVTRRTGVFPQLKYVKFNCLKCGSILGPFFQDSNEEIRISFCTNCKSKGPFRVNGEKTVYRNYQRVTLQEAPGTVPPGRLPRHREVILLADLVDVSKPGEEVEVTGIYKNNYDGNLNAKNGFPVFATIIEANSIKRREGNTANEGEEGLDVFSWTEEEEREFRKISRDRGIIDKIISSMAPSIYGHRDIKTAVACSLFGGVPKNVNGKHSIRGDINVLLLGDPGTAKSQILKYVEKTAHRAVFATGQGASAVGLTASVRKDPITKEWTLEGGALVLADKGVCLIDEFDKMNDQDRTSIHEAMEQQSISISKAGIVTTLQARCSIIAAANPNGGRYNSTLPLAQNVSLTEPILSRFDILCVVRDLVDEEADERLATFVVDSHVRSHPENDEDREGEELKNNGESAIEQGEDEINEQLNARQRRLQRQRKKEEEISPIPQELLMKYIHYARTKIYPKLHQMDMDKVSRVYADLRRESISTGSFPITVRHLESILRIAESFAKMRLSEFVSSYDLDRAIKVVVDSFVDAQKVSVRRQLRRSFAIYTLGH.

Disordered regions lie at residues 1–65 (MSDN…DEVE) and 87–106 (NRDR…ELSL). Residues S14, S16, and S23 each carry the phosphoserine modification. Residues 49–65 (EGDDNEVDDVPDIDEVE) show a composition bias toward acidic residues. A phosphoserine mark is found at S164 and S170. The C4-type zinc-finger motif lies at 341–367 (CLKCGSILGPFFQDSNEEIRISFCTNC). The MCM domain occupies 493–700 (IIDKIISSMA…ADERLATFVV (208 aa)). Position 543–550 (543–550 (GDPGTAKS)) interacts with ATP. The Arginine finger signature appears at 675–678 (SRFD). Residues 704–728 (VRSHPENDEDREGEELKNNGESAIE) form a disordered region.

The protein belongs to the MCM family. As to quaternary structure, component of the MCM2-7 complex. The complex forms a toroidal hexameric ring with the proposed subunit order MCM2-MCM6-MCM4-MCM7-MCM3-MCM5; loaded onto DNA, forms a head-head double hexamer.

The protein resides in the nucleus. It catalyses the reaction ATP + H2O = ADP + phosphate + H(+). Acts as a component of the MCM2-7 complex (MCM complex) which is the putative replicative helicase essential for 'once per cell cycle' DNA replication initiation and elongation in eukaryotic cells. The active ATPase sites in the MCM2-7 ring are formed through the interaction surfaces of two neighboring subunits such that a critical structure of a conserved arginine finger motif is provided in trans relative to the ATP-binding site of the Walker A box of the adjacent subunit. The six ATPase active sites, however, are likely to contribute differentially to the complex helicase activity; specifically the MCM2-MCM5 association is proposed to be reversible and to mediate a open ring conformation which may facilitate DNA loading. Once loaded onto DNA, double hexamers can slide on dsDNA in the absence of ATPase activity. Necessary for cell growth. In Saccharomyces cerevisiae (strain ATCC 204508 / S288c) (Baker's yeast), this protein is DNA replication licensing factor MCM2 (MCM2).